A 430-amino-acid chain; its full sequence is Asparagine--tRNA ligase (430 aa).

The protein belongs to the class-II aminoacyl-tRNA synthetase family. Homodimer.

The protein localises to the cytoplasm. It carries out the reaction tRNA(Asn) + L-asparagine + ATP = L-asparaginyl-tRNA(Asn) + AMP + diphosphate + H(+). This Bacillus licheniformis (strain ATCC 14580 / DSM 13 / JCM 2505 / CCUG 7422 / NBRC 12200 / NCIMB 9375 / NCTC 10341 / NRRL NRS-1264 / Gibson 46) protein is Asparagine--tRNA ligase.